Consider the following 577-residue polypeptide: Arginine--tRNA ligase (577 aa).

The 'HIGH' region motif lies at 122–132 (PNVAKEMHVGH).

The protein belongs to the class-I aminoacyl-tRNA synthetase family. As to quaternary structure, monomer.

The protein resides in the cytoplasm. The catalysed reaction is tRNA(Arg) + L-arginine + ATP = L-arginyl-tRNA(Arg) + AMP + diphosphate. The polypeptide is Arginine--tRNA ligase (Escherichia coli O81 (strain ED1a)).